A 136-amino-acid polypeptide reads, in one-letter code: Probable endoribonuclease MazF7 (136 aa).

The tract at residues T115 to P136 is disordered.

Belongs to the PemK/MazF family. In terms of assembly, forms a complex with cognate antitoxin MazE7.

Functionally, toxic component of a type II toxin-antitoxin (TA) system. Upon expression in E.coli and M.smegmatis inhibits cell growth and colony formation. Its toxic effect is neutralized by coexpression with cognate antitoxin MazE7. Probably an endoribonuclease. This Mycobacterium tuberculosis (strain ATCC 25618 / H37Rv) protein is Probable endoribonuclease MazF7 (mazF7).